We begin with the raw amino-acid sequence, 571 residues long: Podocalyxin (571 aa).

Residues 1 to 22 (MRPAPPPPLLLLLLLLPPPSLS) form the signal peptide. At 23 to 474 (HDGTIIAATS…EETEDRFSMP (452 aa)) the chain is on the extracellular side. The interval 94 to 361 (NTVIAPDQDE…QGDDRIKCES (268 aa)) is disordered. Residues 106–116 (STNPTIATSDS) are compositionally biased toward polar residues. Asn-123 carries N-linked (GlcNAc...) asparagine glycosylation. 4 stretches are compositionally biased toward polar residues: residues 126–144 (ILPS…TQTA), 151–169 (NPGT…QTTS), 176–203 (KPSS…STTL), and 218–245 (TASS…SSVT). N-linked (GlcNAc...) asparagine glycosylation is present at Asn-199. Over residues 282–300 (TTSLPSETESLESPSSESP) the composition is skewed to low complexity. Over residues 301–311 (SQPPKLRPTGP) the composition is skewed to pro residues. A compositionally biased stretch (low complexity) spans 312 to 322 (PSSGSSGPAAS). Asn-373 and Asn-383 each carry an N-linked (GlcNAc...) asparagine glycan. The helical transmembrane segment at 475 to 495 (LIITIVCMASFLLLVAALYGC) threads the bilayer. Residues 496–571 (CHQRLSQRKD…DLDEEEDTHL (76 aa)) lie on the Cytoplasmic side of the membrane. Thr-531 carries the post-translational modification Phosphothreonine. Ser-550 bears the Phosphoserine mark. Residue Thr-569 is modified to Phosphothreonine.

This sequence belongs to the podocalyxin family. In terms of assembly, found in a complex with EZR, PODXL and NHERF2. Associates with the actin cytoskeleton through complex formation with EZR and NHERF2. Interacts (via the C-terminal PDZ-binding motif DTHL) with NHERF1 (via the PDZ domains); interaction is not detected in glomerular epithelium cells. Interacts (via the C-terminal PDZ-binding motif DTHL) with NHERF2 (via the PDZ 1 domain); interaction is detected in glomerular epithelium cells. Interacts with EZR. Monomer; when associated with the membrane raft. Oligomer; when integrated in the apical membrane. Interacts with NHERF2. Interacts (via the C-terminal PDZ-binding motif DTHL) with NHERF1 (via the PDZ domains); the interaction take place early in the secretory pathway and is necessary for its apical membrane sorting. Post-translationally, N- and O-linked glycosylated. Sialoglycoprotein. As to expression, expressed in glomerular and tubular epithelial cells and peritubular capillaries of the kidney (at protein level). Expressed in heart, lung, renal cortex and medulla, kidney and muscle.

Its subcellular location is the apical cell membrane. It localises to the membrane raft. The protein localises to the cell projection. The protein resides in the lamellipodium. It is found in the filopodium. Its subcellular location is the ruffle. It localises to the microvillus. The protein localises to the membrane. In terms of biological role, involved in the regulation of both adhesion and cell morphology and cancer progression. Functions as an anti-adhesive molecule that maintains an open filtration pathway between neighboring foot processes in the podocyte by charge repulsion. Acts as a pro-adhesive molecule, enhancing the adherence of cells to immobilized ligands, increasing the rate of migration and cell-cell contacts in an integrin-dependent manner. Induces the formation of apical actin-dependent microvilli. Involved in the formation of a preapical plasma membrane subdomain to set up initial epithelial polarization and the apical lumen formation during renal tubulogenesis. Plays a role in cancer development and aggressiveness by inducing cell migration and invasion through its interaction with the actin-binding protein EZR. Affects EZR-dependent signaling events, leading to increased activities of the MAPK and PI3K pathways in cancer cells. This chain is Podocalyxin (PODXL), found in Canis lupus familiaris (Dog).